We begin with the raw amino-acid sequence, 292 residues long: tRNA pseudouridine synthase B (292 aa).

Asp38 (nucleophile) is an active-site residue.

It belongs to the pseudouridine synthase TruB family. Type 1 subfamily.

The catalysed reaction is uridine(55) in tRNA = pseudouridine(55) in tRNA. Its function is as follows. Responsible for synthesis of pseudouridine from uracil-55 in the psi GC loop of transfer RNAs. This is tRNA pseudouridine synthase B from Streptococcus sanguinis (strain SK36).